The primary structure comprises 89 residues: Small ribosomal subunit protein uS15 (89 aa).

This sequence belongs to the universal ribosomal protein uS15 family. As to quaternary structure, part of the 30S ribosomal subunit. Forms a bridge to the 50S subunit in the 70S ribosome, contacting the 23S rRNA.

One of the primary rRNA binding proteins, it binds directly to 16S rRNA where it helps nucleate assembly of the platform of the 30S subunit by binding and bridging several RNA helices of the 16S rRNA. Its function is as follows. Forms an intersubunit bridge (bridge B4) with the 23S rRNA of the 50S subunit in the ribosome. This Pseudoalteromonas atlantica (strain T6c / ATCC BAA-1087) protein is Small ribosomal subunit protein uS15.